The primary structure comprises 117 residues: Large ribosomal subunit protein bL19 (117 aa).

The protein belongs to the bacterial ribosomal protein bL19 family.

Its function is as follows. This protein is located at the 30S-50S ribosomal subunit interface and may play a role in the structure and function of the aminoacyl-tRNA binding site. This Shewanella piezotolerans (strain WP3 / JCM 13877) protein is Large ribosomal subunit protein bL19.